A 105-amino-acid polypeptide reads, in one-letter code: Heat shock protein HspQ (105 aa).

Residues 75-105 (GEMQEEHPEQPSMDELARSIRQQLQAPRLRN) form a disordered region.

The protein belongs to the HspQ family.

It is found in the cytoplasm. In terms of biological role, involved in the degradation of certain denaturated proteins, including DnaA, during heat shock stress. This Cronobacter sakazakii (strain ATCC BAA-894) (Enterobacter sakazakii) protein is Heat shock protein HspQ.